The primary structure comprises 224 residues: Beta-casein (224 aa).

Residues 1 to 15 form the signal peptide; that stretch reads MKVLILACLVALALA. A phosphoserine mark is found at S30, S32, S33, and S34. S50 carries the post-translational modification Phosphoserine; in variant A1, variant A2, variant A3, variant B, variant E, variant F, variant G and variant H.

It belongs to the beta-casein family. As to expression, mammary gland specific. Secreted in milk.

It localises to the secreted. Functionally, important role in determination of the surface properties of the casein micelles. Casoparan acts as a macrophage activator, increasing the phagocytic activity of macrophages and peroxide release from macrophages. It also acts as a bradykinin-potentiating peptide. In terms of biological role, casohypotensin acts as a bradykinin-potentiating peptide. Induces hypotension in rats. Acts as a strong competitive inhibitor of endo-oligopeptidase A. Its function is as follows. Antioxidant peptide has antioxidant activity. The polypeptide is Beta-casein (CSN2) (Bos taurus (Bovine)).